The chain runs to 540 residues: MPKIIAFDEEARRGLERGMNQLADAVKVTLGPKGRNVVLEKKWGVPTITNDGVSIAKEIELEDPYEKIGAELVKEVAKKTNDVAGDGTTTATILAQALVREGLRNVAAGANPLGLKKGIEVAVERVSEELSKQAKEVETKEQIASTASISAGDSAIGGLIAEALDKVGKEGVVTVEESNTFGLELELTEGMRFDKGYISPYFVTDADRQEAVLDDPYILIVNSKISAVKDLLPLLEKVMQTGKPLAIIAEDVEGEALATLVVNKIRGTFKSAAVKAPGFGDRRKAILGDIAILTGGQVISEDVGLKLESTSLDLLGRARKIVVTKDETTVVEGAGDPDQIAGRVSQIRNEIEKSDSDYDREKLQERLAKLAGGVAVIKVGAATEVELKEKKHRIEDAVSNAKAAVEEGIVAGGGVALLQASITAFEKLDLSGDEATGANIVRLALEAPIKQIAFNSGLEGGVVVEKVRNLPTGHGLNAATGEYVDLIGTGIIDPAKVTRSALQNAASIAGLFLTTEAVIADKPEKNPAPAVPGGGGDMDF.

Residues 29–32, 86–90, G413, 477–479, and D493 contribute to the ATP site; these read TLGP, DGTTT, and NAA.

Belongs to the chaperonin (HSP60) family. As to quaternary structure, forms a cylinder of 14 subunits composed of two heptameric rings stacked back-to-back. Interacts with the co-chaperonin GroES.

The protein resides in the cytoplasm. The catalysed reaction is ATP + H2O + a folded polypeptide = ADP + phosphate + an unfolded polypeptide.. Functionally, together with its co-chaperonin GroES, plays an essential role in assisting protein folding. The GroEL-GroES system forms a nano-cage that allows encapsulation of the non-native substrate proteins and provides a physical environment optimized to promote and accelerate protein folding. The polypeptide is Chaperonin GroEL 4 (Frankia casuarinae (strain DSM 45818 / CECT 9043 / HFP020203 / CcI3)).